A 212-amino-acid polypeptide reads, in one-letter code: uncharacterized protein (212 aa).

Transmembrane regions (helical) follow at residues 20–40 (FLIG…LIIC), 70–90 (LMLL…YWLG), 155–175 (FVLI…YLGE), and 192–212 (QIVI…MEKI).

This sequence belongs to the DedA family.

It localises to the cell membrane. This is an uncharacterized protein from Haemophilus influenzae (strain ATCC 51907 / DSM 11121 / KW20 / Rd).